A 359-amino-acid chain; its full sequence is Phospho-N-acetylmuramoyl-pentapeptide-transferase (359 aa).

Helical transmembrane passes span 3 to 23 (QILIAVAIALAVAILLTPVLI), 55 to 75 (VAIIAGIWVSYFGTHLVGVLM), 84 to 104 (GLLVLGLATSLGVVGFLDDLI), 117 to 137 (TAKTVGILVAAVLFGVLALQF), 156 to 176 (IATVTLAPAVFVLFCVVVVSA), 190 to 210 (LAAGAMAMVCAAYVLITFWQF), 231 to 251 (LAIIAAATAGACIGFLWWNAA), 255 to 275 (IFMGDTGSLALGGIIAGLSVT), 283 to 303 (VVLGALFVAEVTSVVVQILAF), and 330 to 350 (VIIRFWLLTAIACGLGVALFY).

This sequence belongs to the glycosyltransferase 4 family. MraY subfamily. Mg(2+) is required as a cofactor.

It localises to the cell membrane. It carries out the reaction UDP-N-acetyl-alpha-D-muramoyl-L-alanyl-gamma-D-glutamyl-meso-2,6-diaminopimeloyl-D-alanyl-D-alanine + di-trans,octa-cis-undecaprenyl phosphate = di-trans,octa-cis-undecaprenyl diphospho-N-acetyl-alpha-D-muramoyl-L-alanyl-D-glutamyl-meso-2,6-diaminopimeloyl-D-alanyl-D-alanine + UMP. It functions in the pathway cell wall biogenesis; peptidoglycan biosynthesis. In terms of biological role, catalyzes the initial step of the lipid cycle reactions in the biosynthesis of the cell wall peptidoglycan: transfers peptidoglycan precursor phospho-MurNAc-pentapeptide from UDP-MurNAc-pentapeptide onto the lipid carrier undecaprenyl phosphate, yielding undecaprenyl-pyrophosphoryl-MurNAc-pentapeptide, known as lipid I. This chain is Phospho-N-acetylmuramoyl-pentapeptide-transferase, found in Mycolicibacterium gilvum (strain PYR-GCK) (Mycobacterium gilvum (strain PYR-GCK)).